Consider the following 197-residue polypeptide: Protein jagunal (197 aa).

Residues 1–39 (MATRGGPMVAGTDGNDFEFRQRVAGTYQISLLNKSRLKY) lie on the Cytoplasmic side of the membrane. The chain crosses the membrane as a helical span at residues 40–60 (CIFFHALLFFVMLAKLTSDIL). Residues 61 to 78 (DHLDIFVLEIEELEVPPP) lie on the Lumenal side of the membrane. Residues 79-99 (LWWEYVWAASLLTSFLGLSAA) traverse the membrane as a helical segment. Over 100–109 (RGNKVREMQK) the chain is Cytoplasmic. The helical transmembrane segment at 110 to 130 (YMVAILLFAILPLFYCFAYYF) threads the bilayer. Over 131–159 (SDVWEFATLDKSVELDETDIFVWRGYPYG) the chain is Lumenal. A helical transmembrane segment spans residues 160–180 (VFWYAFCFVGFQVHGFTLYFA). Topologically, residues 181–197 (YNLVKAWKARTATRKFQ) are cytoplasmic.

It belongs to the jagunal family.

It localises to the endoplasmic reticulum membrane. Required for endoplasmic reticulum organization and proper vesicular traffic during vitellogenesis. Required for oocyte and bristle growth. This Drosophila melanogaster (Fruit fly) protein is Protein jagunal.